Reading from the N-terminus, the 354-residue chain is UDP-3-O-acylglucosamine N-acyltransferase (354 aa).

The active-site Proton acceptor is the histidine 247.

The protein belongs to the transferase hexapeptide repeat family. LpxD subfamily. As to quaternary structure, homotrimer.

It catalyses the reaction a UDP-3-O-[(3R)-3-hydroxyacyl]-alpha-D-glucosamine + a (3R)-hydroxyacyl-[ACP] = a UDP-2-N,3-O-bis[(3R)-3-hydroxyacyl]-alpha-D-glucosamine + holo-[ACP] + H(+). The protein operates within bacterial outer membrane biogenesis; LPS lipid A biosynthesis. Catalyzes the N-acylation of UDP-3-O-acylglucosamine using 3-hydroxyacyl-ACP as the acyl donor. Is involved in the biosynthesis of lipid A, a phosphorylated glycolipid that anchors the lipopolysaccharide to the outer membrane of the cell. In Chlamydia trachomatis serovar L2 (strain ATCC VR-902B / DSM 19102 / 434/Bu), this protein is UDP-3-O-acylglucosamine N-acyltransferase.